We begin with the raw amino-acid sequence, 85 residues long: Elongation factor 1-beta (85 aa).

Belongs to the EF-1-beta/EF-1-delta family.

Its function is as follows. Promotes the exchange of GDP for GTP in EF-1-alpha/GDP, thus allowing the regeneration of EF-1-alpha/GTP that could then be used to form the ternary complex EF-1-alpha/GTP/AAtRNA. The protein is Elongation factor 1-beta of Methanoregula boonei (strain DSM 21154 / JCM 14090 / 6A8).